We begin with the raw amino-acid sequence, 61 residues long: Weak toxin CM-2 (61 aa).

4 disulfide bridges follow: Cys3–Cys21, Cys14–Cys37, Cys41–Cys53, and Cys54–Cys59.

It belongs to the three-finger toxin family. Short-chain subfamily. Orphan group VI sub-subfamily. Expressed by the venom gland.

Its subcellular location is the secreted. The protein is Weak toxin CM-2 of Naja haje haje (Egyptian cobra).